We begin with the raw amino-acid sequence, 87 residues long: U3-theraphotoxin-Hhn1a 6 (87 aa).

The first 24 residues, 1 to 24, serve as a signal peptide directing secretion; sequence MVNMKASMFLTFAGLVLLFVVCYA. A propeptide spanning residues 25–52 is cleaved from the precursor; it reads SESEKKEFPKEMLSSIFAVDNDFKQEER. Disulfide bonds link cysteine 54/cysteine 67, cysteine 61/cysteine 72, and cysteine 66/cysteine 79.

The protein belongs to the neurotoxin 10 (Hwtx-1) family. 51 (Hntx-8) subfamily. Hntx-8 sub-subfamily. Expressed by the venom gland.

It is found in the secreted. In terms of biological role, ion channel inhibitor. The polypeptide is U3-theraphotoxin-Hhn1a 6 (Cyriopagopus hainanus (Chinese bird spider)).